The following is a 512-amino-acid chain: DNA damage-binding protein CMR1 (512 aa).

The segment at 32 to 96 (SQIKREAGVE…IPNVNDNQLL (65 aa)) is disordered. Over residues 34 to 46 (IKREAGVEDEHLD) the composition is skewed to basic and acidic residues. Residues 47-60 (RKRKKKAGSAKKAV) show a composition bias toward basic residues. 7 WD repeats span residues 189–230 (LTAE…PEDE), 241–281 (LFTK…SEEI), 289–329 (DDPL…TEIN), 333–373 (LSDK…NKPE), 390–429 (DSRL…PEDL), 442–481 (GRWT…LAHL), and 482–512 (PTAT…FLFT).

The protein belongs to the WD repeat DDB2/WDR76 family.

Its function is as follows. DNA-binding protein that binds to both single- and double-stranded DNA. Binds preferentially to UV-damaged DNA. May be involved in DNA-metabolic processes. The polypeptide is DNA damage-binding protein CMR1 (Kluyveromyces lactis (strain ATCC 8585 / CBS 2359 / DSM 70799 / NBRC 1267 / NRRL Y-1140 / WM37) (Yeast)).